The primary structure comprises 246 residues: Protein-lysine N-methyltransferase EFM6 (246 aa).

Residues tryptophan 51, 87–89 (GSG), aspartate 115, tryptophan 143, and alanine 169 each bind S-adenosyl-L-methionine.

Belongs to the class I-like SAM-binding methyltransferase superfamily. METTL21 family. EFM6 subfamily.

The protein localises to the cytoplasm. Functionally, S-adenosyl-L-methionine-dependent protein-lysine N-methyltransferase that methylates elongation factor 1-alpha (TEF1 and TEF2) at 'Lys-390'. This Saccharomyces cerevisiae (strain ATCC 204508 / S288c) (Baker's yeast) protein is Protein-lysine N-methyltransferase EFM6.